We begin with the raw amino-acid sequence, 331 residues long: Ferredoxin--NADP reductase 2 (331 aa).

Residues E37, Q45, Y50, V90, F124, D286, and T327 each contribute to the FAD site.

Belongs to the ferredoxin--NADP reductase type 2 family. As to quaternary structure, homodimer. Requires FAD as cofactor.

The enzyme catalyses 2 reduced [2Fe-2S]-[ferredoxin] + NADP(+) + H(+) = 2 oxidized [2Fe-2S]-[ferredoxin] + NADPH. This Listeria monocytogenes serotype 4b (strain F2365) protein is Ferredoxin--NADP reductase 2.